Consider the following 262-residue polypeptide: Tethering factor for nuclear proteasome cut8 (262 aa).

Belongs to the cut8/STS1 family. Binds the proteasome. Post-translationally, the N-terminal part (residues 1 to 72) is polyubiquitinated by rhp6, which is required for the interaction with the proteasome.

Its subcellular location is the nucleus envelope. Its function is as follows. Together with nucleoporin alm1, tethers the proteasome to the nuclear envelope. Involved in ubiquitin-mediated protein degradation and facilitates the degradation of nuclear proteins like mitotic cyclin and cut2. Required for normal progression of anaphase. This is Tethering factor for nuclear proteasome cut8 from Schizosaccharomyces pombe (strain 972 / ATCC 24843) (Fission yeast).